The primary structure comprises 321 residues: Protein translocase subunit SecF (321 aa).

Transmembrane regions (helical) follow at residues 23-43 (VWLI…FSWT), 158-178 (LQTT…YISI), 189-209 (LLAL…LGII), 217-237 (LFAV…VVVF), 258-280 (FAVS…PLIA), and 290-312 (YWFA…ALVP).

Belongs to the SecD/SecF family. SecF subfamily. In terms of assembly, forms a complex with SecD. Part of the essential Sec protein translocation apparatus which comprises SecA, SecYEG and auxiliary proteins SecDF. Other proteins may also be involved.

It localises to the cell inner membrane. Part of the Sec protein translocase complex. Interacts with the SecYEG preprotein conducting channel. SecDF uses the proton motive force (PMF) to complete protein translocation after the ATP-dependent function of SecA. In terms of biological role, probably participates in protein translocation into and across both the cytoplasmic and thylakoid membranes in cyanobacterial cells. This Prochlorococcus marinus (strain SARG / CCMP1375 / SS120) protein is Protein translocase subunit SecF.